We begin with the raw amino-acid sequence, 303 residues long: Cyclin-dependent kinase B1-1 (303 aa).

A Protein kinase domain is found at Tyr4–Phe295. Residues Val10–Val18 and Lys33 contribute to the ATP site. A Phosphothreonine modification is found at Thr14. The residue at position 15 (Tyr15) is a Phosphotyrosine. Catalysis depends on Asp136, which acts as the Proton acceptor. Phosphothreonine is present on Thr170.

It belongs to the protein kinase superfamily. CMGC Ser/Thr protein kinase family. CDC2/CDKX subfamily. In terms of tissue distribution, expressed in actively dividing cells: root and shoot apical meristems, and young leaves.

The enzyme catalyses L-seryl-[protein] + ATP = O-phospho-L-seryl-[protein] + ADP + H(+). It carries out the reaction L-threonyl-[protein] + ATP = O-phospho-L-threonyl-[protein] + ADP + H(+). It catalyses the reaction [DNA-directed RNA polymerase] + ATP = phospho-[DNA-directed RNA polymerase] + ADP + H(+). In Oryza sativa subsp. japonica (Rice), this protein is Cyclin-dependent kinase B1-1 (CDKB1-1).